Consider the following 519-residue polypeptide: Halolysin (519 aa).

Residues 1-27 (MAGTPNFDRRSFLRLAAAAGLTGMAGV) constitute a signal peptide (tat-type signal). Positions 28-116 (TSATPGRSPG…AEKNATHEAL (89 aa)) are excised as a propeptide. Residues 127–400 (QYAPQQVNAD…SGRVDAANAV (274 aa)) form the Peptidase S8 domain. Active-site charge relay system residues include Asp154, His193, and Ser347. Residues 386–425 (STKQGSGRVDAANAVTTDPGDGGGGGGGGSKETTYDGTLS) form a disordered region. The span at 405-415 (GDGGGGGGGGS) shows a compositional bias: gly residues.

The protein belongs to the peptidase S8 family. Predicted to be exported by the Tat system. The position of the signal peptide cleavage has not been experimentally proven.

It localises to the secreted. Probable secreted halophilic serine protease showing proteolytic activity toward the protease general substrate azocasein. The sequence is that of Halolysin (hly) from Haloferax mediterranei (strain ATCC 33500 / DSM 1411 / JCM 8866 / NBRC 14739 / NCIMB 2177 / R-4) (Halobacterium mediterranei).